The primary structure comprises 78 residues: Acyl carrier protein (78 aa).

Residues 2-77 enclose the Carrier domain; it reads SEIASRVKAI…DAVAYIEEHA (76 aa). Ser-37 bears the O-(pantetheine 4'-phosphoryl)serine mark.

The protein belongs to the acyl carrier protein (ACP) family. Post-translationally, 4'-phosphopantetheine is transferred from CoA to a specific serine of apo-ACP by AcpS. This modification is essential for activity because fatty acids are bound in thioester linkage to the sulfhydryl of the prosthetic group.

It localises to the cytoplasm. It functions in the pathway lipid metabolism; fatty acid biosynthesis. In terms of biological role, carrier of the growing fatty acid chain in fatty acid biosynthesis. The chain is Acyl carrier protein from Bacteroides fragilis (strain ATCC 25285 / DSM 2151 / CCUG 4856 / JCM 11019 / LMG 10263 / NCTC 9343 / Onslow / VPI 2553 / EN-2).